Here is a 4146-residue protein sequence, read N- to C-terminus: MLLAGAGGSSGDGQDGVASGPAESAAGILGRLHQLHGLLSLESGVGAEGAHSLLHNLAEECLVSALGSSALDLNTSLIFSKEFGLLAFVRKSLSSDEFKDCREEALKFLYTFLEKIGSNVQPYAMDIKTLCVIVYTKDRAAKCKIPSLELLIKLLQLLKNSIIIEEFKIGEIFNKFYGELATKSKLSDTVLEKVYELLGILGEVQPCEMTYNSEKLFKAFLGELKAQMNSSTRNPKFPVIAGCLKGLSALMINFTKTMEEDPRTSKEIFDYTVKAISPQVEMKRYAVPSAGLNLLALHASQFSSYLMDDYQSLFEVISKWCGHTNGEMKKLAFAALDSFLKQIAHLVASDAETHKNKLHFFMEQFYEIIRKMDSSNKELSIAIRGYGLFAAPCKAVNAKNVDLMYIELIQRCKQMYLTEADTEEDNVYQLPNFLQSVASVILHMDSIPEVYTPILERLLVVQIDSFPQYSLKMQSSCCKAVLKVFLSLAGKGPVLWSLISTVVHQGLIRVCSKPVVLAQDGKEGSEAETAAATGEVRAGKWKVPTYKDYLDLFRNLLRCDQLKDSIFSDEIFSTVNSPLQSLNRLLYDELMKSILKIIEKLDLSLQKQDTGQEDDGGINNLLINATSDPAGNLYATKPKDFTAFVNLVEFCSEILPKEHIEYFESWVYVFGYELVLQSTRLPLISGFYKLLSVVMKNAKKSRYFEGFTSKIYKKAPEDPERLSCFALFAKFGKEVSSKIRQFKDELLASCLTFVLHLPHDIIMMDIKAYIPALQTAFKLGLSCPPLADVGLNALQYWSTNIPSDILKPYYKDIIPLLDGYLTNLSSTNESLSTLDMVRISRSLHKGFNKQLIQQLKRMKTLSVKEESSLTAVRNRVVRILGSLGGQINRSLVTAASTEEMIKRHVSWDTEKRLRFDVPFKDLKPVIYLDMFLPHITELALSTSDRQTKVAACELLHSIVAFMLGKATQMPDDKKTGSSPMYKIYKRTFPVLLRLACDVDKVTEQLYKPLVMSLIHWFTNNKKFESQDTVALLEAILTGIVDPVDSTLRDFCGQCIQEFLRWSIKQTTPDQQAKSPVNTTSLFKRLYSLALHPNAFKRLGAALAFNNIYRDFREETALVENFVFEVLVIYMESLALSHADEKSLGTTQQCSDAVDHLKRIIIRKAASLNKATKRRIPRGFPQGNTVCLFDIVLWLLEQCGRPQTECRHKAMQLFFEFVPLLPGNKPLTAWLDDQVEKEGIIFLINRFEGAGHSDGMHTGIFNIPALHDLHEPFSMHAVLQWLDMLLAALDCYNTFIGMRFLKANTVLGKNAEKSSFLKAAFFFITSLSMENIKAAEQCMGSKSSVFSPHEIEAYNYSKCTIIVRIMEFITMFIDICQQDSLKILENSVFNEPMWELIAITVCDPSSIGFNTADVEVINNLPNICIKLMKALGNTSYRSSLEVSLKKRVTLQSIEELCSVDLYDPGARFNRVKLGSVLSACKQLYKAEFFNSIVPEQVGGQRFGSKLLSVVYKGIAPTNERKSLPSLDISSKRLAEGLLELAFMFGGQCEELVSLLLNTVILSVPLPGTSQRNIINFSHGGYFYTLFAETINTELLNNLDTIVVELMKSSLEDPKMVSCVLNGMLDQSFRQRTIRKQQGVKLVNAVLENWRRLDSWWYKDSPSESKMAVLTLLAKVLQIDSSVCFDINHSAFAEVFKTYTSILTDQKLGLNLKSQAIIILPFFTKLTGEKLTELKNTLDQFVASNFPMKSDEFPKGTLKFNNYVDCIKKFLDALELSQSPMLLQLMTEILCRDERHFMEELFQSSFKKVIKRSSCDTQVILLNTLHNMFKSESLMLNGTLQSLIDRCLLTLLWNCSLDAMISFFTNIISLAMDTLKSRFTKVPEAAFDSQITKKWGYYKMLEVQYSRLSKDEIYSTVNNAYHVSSKPEGNELTKALIKLCYDTFTENMCGETQLLEKRRQYHCAAYNCAISLISCVFSELKFYQGFLFTEKKEKNLLIFENLIDLQRNYTFPIEVEVPMERKKKYFAIRKEARDASSTESDEPSYLSSQSYMADSSLIEEMSQFDFSTGVQSFSYSSQSKMLSQSASRKKEQITEGKTFDDVMEFEMDELNQHECMAAMTGLIKHMNRSEITPKVDEDASPQELPSWMKFLHVKLGNTSTPLNIRLFIAKLIVNTEEVFRPYARFWIGPILQLIVSGNNGGTGIHYMVVETLVTILSWSSIATPNGQAKEEILANRLLEFLMKNVFHEKRAVFRHNLEIIKTVLECWKECLSIPYRLIYEGFSGTDPNTKDNSVGIQLLGLALANNFSPLDPKCGIDPERYFQSLANNLGLTRFKEVYIAAAEVIGLVLRYIVQNEKRTEAPVFDYVVKELKRHQTNNKEDKFIMCLNKVVKNFPPFADRFMTIVLFLLPKLHGVLKTQCLEIIMHRAEDIPDLFIELKNKDFCQIMNNRDDERQRVCLDIIYKILSKLTPAELHEFLIPVTAFSSHSFPVCRERMYDIFMWIYDNYRDHESQNDSKSVEVFNMAKEGLLQGLVDENTELQLIVRNFWSDETRLPSNTTERMLAILSSLYSPKIEKHYLSLATNLLLEMTSKSPDYIRKMFEHPLSECKFQDYTVDSSWRFRSSVLTPMFVETQLSQSMQRSRAQGTIEADEPIGGQLRATQQHYQFTPTQNIGGRSSFNWLTGSSMDTLADYSVESPESLPSALLFVNKRNENVRRVPLKPLGPNFGMRRLGLPGDVTDSKTKSMEDRSDILRLRRRFLKDREKLSLIYARKGTAEQKREKAIKIEQKMKQDAQITLYRNYRQGELPDIQISYSNLIAPLQALAQRDPTMAKLLFSSLFSGILTDTASDISVTDKLLKQFNSFLSNSLSYFPPFIACVQDMCYQHDELLHLNPANISTSCLASLQQPLGILLLEKGLLHMKVPDEPPAKKMRKEKEKAEIPPDIVRWIELAKLYRSIGDYDVLRGIFSGKIGAKSITQCALNAEAKSDYAKAAKLYDEALTETFSDGDPTDAEKDFWELASLECYNHLTEWKPLEYCSTVNIDTGKPPDLNKMWSDPFYQETYLPYMIRSKLKMLLGGNNDQTLLTFVDEAMKVEQRKVLMETFYSQELSLLYILQDDFDRAKYYINNGIQVFMQNYSSIDCLLYQSRLTKLQSVQALTETQDFISFIRKPGNVSSSSLRKLFQGWMKRYPDSKMDPMNIWDDIISNRCFFLDKIQDVAVGHPQLVDESMEVDDLADGNEAMEVDRQEDIAVMINKCRFTMKMKMVDSARKQNNFSVAMKLLKDLHRESKTNEDWSVKWIHSYSRYSHSRSRDLTCSEQILTALKTIPLLEESKTEYLTKNTKACRYQNMLLGDTYRIMADAVCKEPDCLYKIEDGKAGKVKDLSESPENVVGGLYRKSLHYFTNAVRKATEEEQSHSTDQIDVRGIIKAYMTLVDFCDSHLRKVEEESAVMDRADYQNFPEIMVEKMIKALKLNSSEARLKFPRMLQIIEQYPSETLDLMARENCTVPCWQFIGWISQMMAMLDKKESIAVQHIIEEIAENYPQALVYPFMVSGESYNFEDTVVGHKNREYVNRIKSKLDKDNVAQDFIRALEQLSNPPMIFQDWWEDVSNELSKPNVNKNKIKELYKEMYTNLGNPKDHFMGAFRRRFCEKYTKDFDKAFGPEGSKLLNIKCDGFNKTVGPLITKMKEQQKEPGNLKEYSPWMSEFKPEFLRNELEIPGQYSGRSKPMPEYHVKISGFDERVSVMASIRKPKRIIVRGNDEREYPFLVKGGEDLRQDQRIEQLFEIMNIILSQDAACSQRHMQLKTYQVIPMTTRIGLIEWLENTCTLKEFILNTMTEDEAKIYNSKTTNGPLYHYNAWLDKKEKVGDARQHVTSYTRCDRTNTVASFREREALVPKDLLRRAFVKMSTTPEAFLSLRSHFARSHALLCVSHWIVGIGDRHLSNFMINMETGGMIGIDFGHAFGTATQFLPVPELMPFRLTRQIVNLMLPMKDSGLFDSVMVHSLRAYRSDPGLLVTTMDVFIKEPSLDWKNLELKQMKKKGEWKKAVDVTSHNWHPQQKIHCAKRKLDGANPCEITCEELRLGHESAPEYKDFIAVARGDKKHNRRTNEPPDGLTEETQVQCLIDQATDPNILGRVWKGWEPWI.

HEAT repeat units lie at residues 308–343, 925–962, 1026–1062, and 1075–1111; these read DDYQ…LKQI, VIYL…VAFM, QDTV…LRWS, and PVNT…YRDF. 2 TPR repeats span residues 1745 to 1778 and 1974 to 2007; these read PMKS…SQSP and VFSE…QRNY. Serine 2075 is modified (phosphoserine; by autocatalysis). Threonine 2631 is subject to Phosphothreonine; by autocatalysis. Position 2634 is a phosphoserine; by autocatalysis (serine 2634). A phosphothreonine; by autocatalysis mark is found at threonine 2659 and threonine 2668. Residues 2873–3556 enclose the FAT domain; it reads FIACVQDMCY…VYPFMVSGES (684 aa). The region spanning 3739–4071 is the PI3K/PI4K catalytic domain; sequence FDERVSVMAS…IHCAKRKLDG (333 aa). A G-loop region spans residues 3745-3751; sequence VMASIRK. Residues 3937–3945 are catalytic loop; that stretch reads GIGDRHLSN. The interval 3957-3982 is activation loop; that stretch reads GIDFGHAFGTATQFLPVPELMPFRLT. The FATC domain occupies 4114–4146; that stretch reads DGLTEETQVQCLIDQATDPNILGRVWKGWEPWI.

The protein belongs to the PI3/PI4-kinase family. As to quaternary structure, DNA-PK is a heterotrimer of prkdc and the Ku dimer (composed of xrcc6/Ku70 and xrcc5/Ku86). Component of the core long-range non-homologous end joining (NHEJ) complex (also named DNA-PK complex) composed of prkdc, lig4, xrcc4, xrcc6/ku70, xrcc5/ku86 and nhej1/xlf. Additional component of the NHEJ complex includes paxx. Following autophosphorylation, prkdc dissociates from DNA. Autophosphorylated at two clusters, the T2609 cluster and the S2056 cluster. Autophosphorylated on Ser-2075, Thr-2631, Thr-2659 and Thr-2668. Ser-2075 and Thr-2668 are DNA damage-inducible phosphorylation sites (inducible with ionizing radiation, IR) dephosphorylated by PPP5C. Autophosphorylation induces a conformational change that leads to remodeling of the DNA-PK complex, requisite for efficient end processing and DNA repair. Autophosphorylation in trans within DNA-PK complexes loaded on DNA ends leads to the dissociation of PRKDC from DNA and the transition into the short-range NHEJ complex. Autophosphorylation of the T2609 cluster is required for hematopoietic development and protein synthesis in erythrocytes precursors.

The protein localises to the nucleus. The protein resides in the nucleolus. It catalyses the reaction L-seryl-[protein] + ATP = O-phospho-L-seryl-[protein] + ADP + H(+). The enzyme catalyses L-threonyl-[protein] + ATP = O-phospho-L-threonyl-[protein] + ADP + H(+). Serine/threonine-protein kinase that acts as a molecular sensor for DNA damage. Involved in DNA nonhomologous end joining (NHEJ) required for double-strand break (DSB) repair and V(D)J recombination. Must be bound to DNA to express its catalytic properties. Promotes processing of hairpin DNA structures in V(D)J recombination by activation of the hairpin endonuclease artemis (DCLRE1C). Recruited by XRCC5 and XRCC6 to DNA ends and is required to (1) protect and align broken ends of DNA, thereby preventing their degradation, (2) and sequester the DSB for repair by NHEJ. Acts as a scaffold protein to aid the localization of DNA repair proteins to the site of damage. The assembly of the DNA-PK complex at DNA ends is also required for the NHEJ ligation step. Found at the ends of chromosomes, suggesting a further role in the maintenance of telomeric stability and the prevention of chromosomal end fusion. As part of the DNA-PK complex, involved in the early steps of ribosome assembly by promoting the processing of precursor rRNA into mature 18S rRNA in the small-subunit processome. Recognizes the substrate consensus sequence [ST]-Q. Phosphorylates 'Ser-139' of histone variant H2AX, thereby regulating DNA damage response mechanism. This is DNA-dependent protein kinase catalytic subunit (prkdc) from Xenopus laevis (African clawed frog).